The primary structure comprises 296 residues: Ribosomal protein L11 methyltransferase (296 aa).

Residues Thr145, Gly166, Asp188, and Asn230 each contribute to the S-adenosyl-L-methionine site.

The protein belongs to the methyltransferase superfamily. PrmA family.

It localises to the cytoplasm. The enzyme catalyses L-lysyl-[protein] + 3 S-adenosyl-L-methionine = N(6),N(6),N(6)-trimethyl-L-lysyl-[protein] + 3 S-adenosyl-L-homocysteine + 3 H(+). In terms of biological role, methylates ribosomal protein L11. This Histophilus somni (strain 2336) (Haemophilus somnus) protein is Ribosomal protein L11 methyltransferase.